Here is a 207-residue protein sequence, read N- to C-terminus: Urease accessory protein UreG (207 aa).

A GTP-binding site is contributed by 13 to 20 (GPVGSGKT).

Belongs to the SIMIBI class G3E GTPase family. UreG subfamily. Homodimer. UreD, UreF and UreG form a complex that acts as a GTP-hydrolysis-dependent molecular chaperone, activating the urease apoprotein by helping to assemble the nickel containing metallocenter of UreC. The UreE protein probably delivers the nickel.

It localises to the cytoplasm. Facilitates the functional incorporation of the urease nickel metallocenter. This process requires GTP hydrolysis, probably effectuated by UreG. The protein is Urease accessory protein UreG of Azoarcus sp. (strain BH72).